The chain runs to 270 residues: Phosphatidylglycerol--prolipoprotein diacylglyceryl transferase (270 aa).

A run of 4 helical transmembrane segments spans residues 18–38 (ITIY…LWLA), 55–75 (LVLF…VLFE), 90–110 (WQGG…GAVF), and 115–135 (GLSF…GQAI). Position 137 (Arg137) interacts with a 1,2-diacyl-sn-glycero-3-phospho-(1'-sn-glycerol). The next 3 helical transmembrane spans lie at 177–197 (HPTF…LLWL), 205–225 (GELF…IEGM), and 236–256 (LRAA…LWIV).

Belongs to the Lgt family.

It is found in the cell membrane. It carries out the reaction L-cysteinyl-[prolipoprotein] + a 1,2-diacyl-sn-glycero-3-phospho-(1'-sn-glycerol) = an S-1,2-diacyl-sn-glyceryl-L-cysteinyl-[prolipoprotein] + sn-glycerol 1-phosphate + H(+). It functions in the pathway protein modification; lipoprotein biosynthesis (diacylglyceryl transfer). In terms of biological role, catalyzes the transfer of the diacylglyceryl group from phosphatidylglycerol to the sulfhydryl group of the N-terminal cysteine of a prolipoprotein, the first step in the formation of mature lipoproteins. The polypeptide is Phosphatidylglycerol--prolipoprotein diacylglyceryl transferase (Geobacillus kaustophilus (strain HTA426)).